The chain runs to 443 residues: Type I restriction enzyme HindI methylase subunit (443 aa).

S-adenosyl-L-methionine contacts are provided by residues 117-122 (QYFTPK), 146-148 (SGG), and E173.

It belongs to the N(4)/N(6)-methyltransferase family. In terms of assembly, the type I restriction/modification system is composed of three polypeptides R, M and S; the restriction enzyme has stoichiometry R(2)M(2)S(1) while the methyltransferase is M(2)S(1).

The catalysed reaction is a 2'-deoxyadenosine in DNA + S-adenosyl-L-methionine = an N(6)-methyl-2'-deoxyadenosine in DNA + S-adenosyl-L-homocysteine + H(+). Its function is as follows. The subtype gamma methyltransferase (M) subunit of a type I restriction enzyme. The M and S subunits together form a methyltransferase (MTase) that methylates adenosines in the sequence 5'-RAACN(5)TAG-3'. Methylation protects against cleavage by HindI. In the presence of the R subunit the complex can also act as an endonuclease, binding to the same target sequence but cutting the DNA some distance from this site. Whether the DNA is cut or modified depends on the methylation state of the target sequence. When the target site is unmodified, the DNA is cut. When the target site is hemimethylated, the complex acts as a maintenance MTase modifying the DNA so that both strands become methylated. After locating a non-methylated recognition site, the enzyme complex serves as a molecular motor that translocates DNA in an ATP-dependent manner until a collision occurs that triggers cleavage. The chain is Type I restriction enzyme HindI methylase subunit from Haemophilus influenzae (strain ATCC 51907 / DSM 11121 / KW20 / Rd).